The primary structure comprises 117 residues: Large ribosomal subunit protein bL20c (117 aa).

It belongs to the bacterial ribosomal protein bL20 family.

The protein localises to the plastid. Its subcellular location is the chloroplast. Binds directly to 23S ribosomal RNA and is necessary for the in vitro assembly process of the 50S ribosomal subunit. It is not involved in the protein synthesizing functions of that subunit. The chain is Large ribosomal subunit protein bL20c from Drimys granadensis.